The chain runs to 410 residues: Serine/threonine transporter SstT (410 aa).

The next 9 membrane-spanning stretches (helical) occupy residues 11–31, 45–65, 79–99, 138–158, 179–199, 214–234, 285–305, 327–347, and 353–373; these read VSLV…AVTV, FVGA…ISAI, ILIL…VASF, ALLN…GIAL, IVTW…FDAI, LAVL…LIVF, ISIP…ISVL, VLSA…LLLI, and LFGI…IIGV.

It belongs to the dicarboxylate/amino acid:cation symporter (DAACS) (TC 2.A.23) family.

The protein localises to the cell membrane. The enzyme catalyses L-serine(in) + Na(+)(in) = L-serine(out) + Na(+)(out). It catalyses the reaction L-threonine(in) + Na(+)(in) = L-threonine(out) + Na(+)(out). Functionally, involved in the import of serine and threonine into the cell, with the concomitant import of sodium (symport system). The chain is Serine/threonine transporter SstT from Geobacillus thermodenitrificans (strain NG80-2).